We begin with the raw amino-acid sequence, 190 residues long: HTH-type transcriptional repressor CutR (190 aa).

Residues 3–58 (PINRQQHILKWLKEEGSLRISDISARFGVSEMTVYRDVNQLVQSNQVIKTAGGITL) form the HTH deoR-type domain. A DNA-binding region (H-T-H motif) is located at residues 20 to 39 (LRISDISARFGVSEMTVYRD).

It localises to the cytoplasm. In terms of biological role, may act as a negative transcriptional regulator of cutJ/ycnJ in the presence of copper. May use copper as a corepressor. The polypeptide is HTH-type transcriptional repressor CutR (Bacillus subtilis (strain 168)).